Consider the following 72-residue polypeptide: Translation initiation factor IF-1 (72 aa).

The 72-residue stretch at 1–72 (MAKEDTLEFP…SKGRINYRFK (72 aa)) folds into the S1-like domain.

The protein belongs to the IF-1 family. In terms of assembly, component of the 30S ribosomal translation pre-initiation complex which assembles on the 30S ribosome in the order IF-2 and IF-3, IF-1 and N-formylmethionyl-tRNA(fMet); mRNA recruitment can occur at any time during PIC assembly.

It localises to the cytoplasm. Its function is as follows. One of the essential components for the initiation of protein synthesis. Stabilizes the binding of IF-2 and IF-3 on the 30S subunit to which N-formylmethionyl-tRNA(fMet) subsequently binds. Helps modulate mRNA selection, yielding the 30S pre-initiation complex (PIC). Upon addition of the 50S ribosomal subunit IF-1, IF-2 and IF-3 are released leaving the mature 70S translation initiation complex. The chain is Translation initiation factor IF-1 from Cereibacter sphaeroides (strain ATCC 17029 / ATH 2.4.9) (Rhodobacter sphaeroides).